A 486-amino-acid chain; its full sequence is MISNGSKTRKNLGAIALAGMVISSMIGGGIFSLPQNMAASAGAGAIILAWILTGIGMFFIANTFKILSLVRPDLTTGIYMYSREGFGPYVGFTIGWGYWLCQIFGNVGYAVMTMDALNYFFPPYFKGGNTIPAIIGGSILIWVFNFIVLKGIRQASFINVIGTICKLIPLLIFIIITAFFFKLAIFKTDFWGHTATKTQPLLGSVTSQLKSTMLVTLWAFIGIEGAVVMSARAKSPNAVGKATILGFSGCLIVYVLLSLLPFGSLFQHQLAGIANPSTAGVLDILVGRWGEILMNIGLLIAILSSWLSWTVIVAEIPYSAAKNGTFPEIFTIENAAHSPKVSLYITSALMQVAMLLVYFSTNAWSTMLSITGVMVLPAYLASAAFLVKFSKDKKYPNKGPIKSFTAKYTGILAVIYSIWLIYAGGIKYLFMAIVLLALGIPFYIEAGKKGKNAKTFFAKKEVTKITIIAFLALLAIFLFSTERIRL.

12 helical membrane passes run 12–32 (LGAI…GIFS), 41–61 (AGAG…FFIA), 85–105 (GFGP…QIFG), 129–149 (NTIP…FIVL), 161–181 (IGTI…AFFF), 211–231 (STML…VMSA), 242–262 (ATIL…LLPF), 296–316 (IGLL…VAEI), 341–361 (VSLY…YFST), 367–387 (MLSI…AFLV), 418–438 (IWLI…LLAL), and 461–481 (EVTK…LFST).

It belongs to the amino acid-polyamine-organocation (APC) superfamily. Basic amino acid/polyamine antiporter (APA) (TC 2.A.3.2) family.

The protein localises to the cell inner membrane. In terms of biological role, catalyzes the exchange of L-arginine for agmatine. The arginine uptake by the bacterium in the macrophage may be a virulence factor against the host innate immune response. In Chlamydia felis (strain Fe/C-56) (Chlamydophila felis), this protein is Arginine/agmatine antiporter (aaxC).